A 309-amino-acid chain; its full sequence is Maintenance of mitochondrial morphology protein 1 (309 aa).

Residues 1 to 16 are Lumenal-facing; that stretch reads MGNAYIFSLQPTFTQG. A helical membrane pass occupies residues 17-37; it reads LILGQFSILFLLVLVLKYLFF. Residues 38–309 are Cytoplasmic-facing; the sequence is DTVSDHAYRT…EQQAGELPVN (272 aa). Positions 84–293 constitute an SMP-LTD domain; it reads ECESADWLNA…LPGLASVSEV (210 aa).

Belongs to the MMM1 family. In terms of assembly, homodimer. Component of the ER-mitochondria encounter structure (ERMES) or MDM complex, composed of MMM1, MDM10, MDM12 and MDM34. An MMM1 homodimer associates with one molecule of MDM12 on each side in a pairwise head-to-tail manner, and the SMP-LTD domains of MMM1 and MDM12 generate a continuous hydrophobic tunnel for phospholipid trafficking.

It localises to the endoplasmic reticulum membrane. Component of the ERMES/MDM complex, which serves as a molecular tether to connect the endoplasmic reticulum (ER) and mitochondria. Components of this complex are involved in the control of mitochondrial shape and protein biogenesis, and function in nonvesicular lipid trafficking between the ER and mitochondria. The MDM12-MMM1 subcomplex functions in the major beta-barrel assembly pathway that is responsible for biogenesis of all outer membrane beta-barrel proteins, and acts in a late step after the SAM complex. The MDM10-MDM12-MMM1 subcomplex further acts in the TOM40-specific pathway after the action of the MDM12-MMM1 complex. Essential for establishing and maintaining the structure of mitochondria and maintenance of mtDNA nucleoids. This chain is Maintenance of mitochondrial morphology protein 1, found in Postia placenta (strain ATCC 44394 / Madison 698-R) (Brown rot fungus).